The following is a 169-amino-acid chain: Superoxide dismutase [Cu-Zn] 1 (169 aa).

Positions 1-18 (MFEQWDALCAVLFSFSIA) are cleaved as a signal peptide. Positions 65, 67, and 83 each coordinate Cu cation. A disulfide bond links Cys-72 and Cys-165. 4 residues coordinate Zn(2+): His-83, His-91, His-100, and Asp-103. Cu cation is bound at residue His-145.

Belongs to the Cu-Zn superoxide dismutase family. It depends on Cu cation as a cofactor. The cofactor is Zn(2+).

The catalysed reaction is 2 superoxide + 2 H(+) = H2O2 + O2. Functionally, destroys radicals which are normally produced within the cells and which are toxic to biological systems. The sequence is that of Superoxide dismutase [Cu-Zn] 1 (sodC1) from Aquifex aeolicus (strain VF5).